Consider the following 322-residue polypeptide: Replication factor C small subunit (322 aa).

46–53 lines the ATP pocket; that stretch reads GSAGVGKT.

Belongs to the activator 1 small subunits family. RfcS subfamily. As to quaternary structure, heteromultimer composed of small subunits (RfcS) and large subunits (RfcL).

Functionally, part of the RFC clamp loader complex which loads the PCNA sliding clamp onto DNA. The protein is Replication factor C small subunit of Methanoregula boonei (strain DSM 21154 / JCM 14090 / 6A8).